Consider the following 252-residue polypeptide: Ribonuclease 3 (252 aa).

Residues 3-125 enclose the RNase III domain; the sequence is LATLETRLDH…IFGAAFLDGG (123 aa). Position 38 (Glu38) interacts with Mg(2+). Residue Asp42 is part of the active site. Mg(2+) is bound by residues Asp111 and Glu114. Glu114 is a catalytic residue. One can recognise a DRBM domain in the interval 152–222; it reads DAKTLLQEFL…AKLALEAAQA (71 aa).

The protein belongs to the ribonuclease III family. Homodimer. Requires Mg(2+) as cofactor.

The protein localises to the cytoplasm. It catalyses the reaction Endonucleolytic cleavage to 5'-phosphomonoester.. Its function is as follows. Digests double-stranded RNA. Involved in the processing of primary rRNA transcript to yield the immediate precursors to the large and small rRNAs (23S and 16S). Processes some mRNAs, and tRNAs when they are encoded in the rRNA operon. Processes pre-crRNA and tracrRNA of type II CRISPR loci if present in the organism. This chain is Ribonuclease 3, found in Bordetella petrii (strain ATCC BAA-461 / DSM 12804 / CCUG 43448).